Reading from the N-terminus, the 487-residue chain is NADH-quinone oxidoreductase subunit N (487 aa).

Transmembrane regions (helical) follow at residues 9 to 29 (PVLP…LGVF), 38 to 58 (VSVL…SLGG), 73 to 93 (FAGF…AMSL), 108 to 128 (VLVL…DFIA), 161 to 181 (FVLG…LYGF), 208 to 228 (IIAG…AVPF), 240 to 260 (PTPV…CLLV), 277 to 297 (VVTF…VVQT), 306 to 326 (SSIG…TLGI), 328 to 348 (GVLI…AVIL), 374 to 394 (AFVM…AGFW), 408 to 430 (LYTL…LRIV), and 452 to 472 (LVMA…APLV).

Belongs to the complex I subunit 2 family. NDH-1 is composed of 14 different subunits. Subunits NuoA, H, J, K, L, M, N constitute the membrane sector of the complex.

The protein localises to the cell inner membrane. The enzyme catalyses a quinone + NADH + 5 H(+)(in) = a quinol + NAD(+) + 4 H(+)(out). Functionally, NDH-1 shuttles electrons from NADH, via FMN and iron-sulfur (Fe-S) centers, to quinones in the respiratory chain. The immediate electron acceptor for the enzyme in this species is believed to be ubiquinone. Couples the redox reaction to proton translocation (for every two electrons transferred, four hydrogen ions are translocated across the cytoplasmic membrane), and thus conserves the redox energy in a proton gradient. The chain is NADH-quinone oxidoreductase subunit N from Paramagnetospirillum magneticum (strain ATCC 700264 / AMB-1) (Magnetospirillum magneticum).